We begin with the raw amino-acid sequence, 214 residues long: uncharacterized protein (214 aa).

This sequence belongs to the HHV-5 UL130 protein family. Forms the envelope pentamer complex (PC) composed of gH, gL, UL128, UL130, and UL131A. The pentamer interacts with host NRP2.

The protein localises to the virion membrane. Functionally, plays a role in viral entry into host cells. Forms a pentameric complex at the surface of the viral envelope together with gH, gL, UL130 and UL131. This complex is required for entry in epithelial, endothelial and myeloid host cells. Mechanistically, engages host receptor(s) including neurophilin 2/NRP2 to mediate infection. This is an uncharacterized protein from Human cytomegalovirus (strain AD169) (HHV-5).